The primary structure comprises 61 residues: Fasciculin-2 (61 aa).

Intrachain disulfides connect cysteine 3-cysteine 22, cysteine 17-cysteine 39, cysteine 41-cysteine 52, and cysteine 53-cysteine 59.

The protein belongs to the three-finger toxin family. Short-chain subfamily. Acn-esterase inhibitor sub-subfamily. As to expression, expressed by the venom gland.

The protein resides in the secreted. Its function is as follows. Interferes with neuromuscular transmission by inhibiting the enzyme acetylcholinesterase (AChE) present at the neuromuscular junction. It selectively binds and inhibits with a 1:1 stoichiometry the mammalian and electric fish AChE at picomolar concentrations. It is highly specific for the peripheral site of AChE and blocks the entry of acetylcholine into the active site of the enzyme (through the Met-33 residue), thereby preventing its breakdown. It has been called fasciculin since after injection into mice it causes severe, generalized and long-lasting (5-7 hours) fasciculations. The protein is Fasciculin-2 of Dendroaspis angusticeps (Eastern green mamba).